The chain runs to 838 residues: MWGRLWPLLLSILTATAVPGPSLRRPSRELDATPRMTIPYEELSGTRHFKGQAQNYSTLLLEEASARLLVGARGALFSLSANDIGDGAHKEIHWEASPEMQSKCHQKGKNNQTECFNHVRFLQRLNSTHLYACGTHAFQPLCAAIDAEAFTLPTSFEEGKEKCPYDPARGFTGLIIDGGLYTATRYEFRSIPDIRRSRHPHSLRTEETPMHWLNDAEFVFSVLVRESKASAVGDDDKVYYFFTERATEEGSGSFTQSRSSHRVARVARVCKGDLGGKKILQKKWTSFLKARLICHIPLYETLRGVCSLDAETSSRTHFYAAFTLSTQWKTLEASAICRYDLAEIQAVFAGPYMEYQDGSRRWGRYEGGVPEPRPGSCITDSLRSQGYNSSQDLPSLVLDFVKLHPLMARPVVPTRGRPLLLKRNIRYTHLTGTPVTTPAGPTYDLLFLGTADGWIHKAVVLGSGMHIIEETQVFRESQSVENLVISLLQHSLYVGAPSGVIQLPLSSCSRYRSCYDCILARDPYCGWDPGTHACAAATTIANRTALIQDIERGNRGCESSRDTGPPPPLKTRSVLRGDDVLLPCDQPSNLARALWLLNGSMGLSDGQGGYRVGVDGLLVTDAQPEHSGNYGCYAEENGLRTLLASYSLTVRPATPAPAPKAPATPGAQLAPDVRLLYVLAIAALGGLCLILASSLLYVACLREGRRGRRRKYSLGRASRAGGSAVQLQTVSGQCPGEEDEGDDEGAGGLEGSCLQIIPGEGAPAPPPPPPPPPPAELTNGLVALPSRLRRMNGNSYVLLRQSNNGVPAGPCSFAEELSRILEKRKHTQLVEQLDESSV.

The first 17 residues, 1-17 (MWGRLWPLLLSILTATA), serve as a signal peptide directing secretion. Residues 18–675 (VPGPSLRRPS…GAQLAPDVRL (658 aa)) are Extracellular-facing. One can recognise a Sema domain in the interval 35-505 (RMTIPYEELS…APSGVIQLPL (471 aa)). N-linked (GlcNAc...) asparagine glycans are attached at residues Asn55, Asn111, and Asn126. Cys104 and Cys115 are joined by a disulfide. 3 disulfides stabilise this stretch: Cys133–Cys142, Cys270–Cys377, and Cys294–Cys337. A glycan (N-linked (GlcNAc...) asparagine) is linked at Asn388. In terms of domain architecture, PSI spans 507–558 (SCSRYRSCYDCILARDPYCGWDPGTHACAAATTIANRTALIQDIERGNRGCE). 2 disulfides stabilise this stretch: Cys508/Cys525 and Cys517/Cys534. N-linked (GlcNAc...) asparagine glycosylation is found at Asn542 and Asn598. Residues 567–649 (PPLKTRSVLR…RTLLASYSLT (83 aa)) enclose the Ig-like C2-type domain. Cys584 and Cys632 form a disulfide bridge. The helical transmembrane segment at 676–696 (LYVLAIAALGGLCLILASSLL) threads the bilayer. The Cytoplasmic segment spans residues 697–838 (YVACLREGRR…LVEQLDESSV (142 aa)). Residues 723–777 (SAVQLQTVSGQCPGEEDEGDDEGAGGLEGSCLQIIPGEGAPAPPPPPPPPPPAEL) are disordered. Over residues 736–745 (GEEDEGDDEG) the composition is skewed to acidic residues. The segment covering 763 to 775 (PAPPPPPPPPPPA) has biased composition (pro residues). A phosphoserine mark is found at Ser795 and Ser837.

It belongs to the semaphorin family. As to quaternary structure, interacts with PLXNB2.

It localises to the cell membrane. Its function is as follows. Cell surface receptor for PLXNB2. May play a role in axon guidance. In Homo sapiens (Human), this protein is Semaphorin-4G (SEMA4G).